The chain runs to 447 residues: Phosphoglucosamine mutase (447 aa).

The active-site Phosphoserine intermediate is the Ser-106. Mg(2+) is bound by residues Ser-106, Asp-245, Asp-247, and Asp-249. A Phosphoserine modification is found at Ser-106.

This sequence belongs to the phosphohexose mutase family. The cofactor is Mg(2+). In terms of processing, activated by phosphorylation.

The enzyme catalyses alpha-D-glucosamine 1-phosphate = D-glucosamine 6-phosphate. Functionally, catalyzes the conversion of glucosamine-6-phosphate to glucosamine-1-phosphate. The protein is Phosphoglucosamine mutase of Cupriavidus taiwanensis (strain DSM 17343 / BCRC 17206 / CCUG 44338 / CIP 107171 / LMG 19424 / R1) (Ralstonia taiwanensis (strain LMG 19424)).